The sequence spans 563 residues: Methylcrotonoyl-CoA carboxylase beta chain, mitochondrial (563 aa).

A mitochondrion-targeting transit peptide spans 1-22 (MWGALRSALRPCCRAAVPPQRA). A CoA carboxyltransferase N-terminal domain is found at 49-306 (MKALVSQLHE…QKKMDVTIEP (258 aa)). Residues 49 to 555 (MKALVSQLHE…SAALNAPIQR (507 aa)) are carboxyltransferase. Position 70 is an N6-acetyllysine; alternate (lysine 70). N6-succinyllysine; alternate is present on lysine 70. Residue lysine 141 is modified to N6-succinyllysine. Residues 309–555 (EPLFPADELY…SAALNAPIQR (247 aa)) form the CoA carboxyltransferase C-terminal domain. The interval 343–372 (RFNEFKALYGDTLVTGFARIFGYPVGIIGN) is acyl-CoA binding. An N6-succinyllysine modification is found at lysine 433. Lysine 495 bears the N6-acetyllysine; alternate mark. N6-succinyllysine; alternate is present on lysine 495. Lysine 511 carries the N6-acetyllysine modification.

This sequence belongs to the AccD/PCCB family. In terms of assembly, probably a dodecamer composed of six biotin-containing alpha subunits (MCCC1) and six beta (MCCC2) subunits.

It is found in the mitochondrion matrix. It catalyses the reaction 3-methylbut-2-enoyl-CoA + hydrogencarbonate + ATP = 3-methyl-(2E)-glutaconyl-CoA + ADP + phosphate + H(+). Its pathway is amino-acid degradation; L-leucine degradation; (S)-3-hydroxy-3-methylglutaryl-CoA from 3-isovaleryl-CoA: step 2/3. Its function is as follows. Carboxyltransferase subunit of the 3-methylcrotonyl-CoA carboxylase, an enzyme that catalyzes the conversion of 3-methylcrotonyl-CoA to 3-methylglutaconyl-CoA, a critical step for leucine and isovaleric acid catabolism. This is Methylcrotonoyl-CoA carboxylase beta chain, mitochondrial (Mccc2) from Mus musculus (Mouse).